A 309-amino-acid polypeptide reads, in one-letter code: Homoserine kinase (309 aa).

91–101 (PIGSGLGSSAC) provides a ligand contact to ATP.

It belongs to the GHMP kinase family. Homoserine kinase subfamily.

The protein resides in the cytoplasm. It carries out the reaction L-homoserine + ATP = O-phospho-L-homoserine + ADP + H(+). It functions in the pathway amino-acid biosynthesis; L-threonine biosynthesis; L-threonine from L-aspartate: step 4/5. Catalyzes the ATP-dependent phosphorylation of L-homoserine to L-homoserine phosphate. The chain is Homoserine kinase from Pectobacterium atrosepticum (strain SCRI 1043 / ATCC BAA-672) (Erwinia carotovora subsp. atroseptica).